Consider the following 159-residue polypeptide: Ribosome maturation factor RimP (159 aa).

It belongs to the RimP family.

It is found in the cytoplasm. Functionally, required for maturation of 30S ribosomal subunits. The chain is Ribosome maturation factor RimP from Streptococcus agalactiae serotype III (strain NEM316).